Consider the following 440-residue polypeptide: 3-phosphoshikimate 1-carboxyvinyltransferase (440 aa).

Residues lysine 26, serine 27, and arginine 31 each contribute to the 3-phosphoshikimate site. Lysine 26 serves as a coordination point for phosphoenolpyruvate. 2 residues coordinate phosphoenolpyruvate: glycine 99 and arginine 127. 3-phosphoshikimate is bound by residues serine 172, glutamine 174, aspartate 320, and lysine 347. Residue glutamine 174 participates in phosphoenolpyruvate binding. Aspartate 320 functions as the Proton acceptor in the catalytic mechanism. Phosphoenolpyruvate-binding residues include arginine 351 and arginine 392.

It belongs to the EPSP synthase family. In terms of assembly, monomer.

It localises to the cytoplasm. It catalyses the reaction 3-phosphoshikimate + phosphoenolpyruvate = 5-O-(1-carboxyvinyl)-3-phosphoshikimate + phosphate. It participates in metabolic intermediate biosynthesis; chorismate biosynthesis; chorismate from D-erythrose 4-phosphate and phosphoenolpyruvate: step 6/7. Catalyzes the transfer of the enolpyruvyl moiety of phosphoenolpyruvate (PEP) to the 5-hydroxyl of shikimate-3-phosphate (S3P) to produce enolpyruvyl shikimate-3-phosphate and inorganic phosphate. This is 3-phosphoshikimate 1-carboxyvinyltransferase from Xanthomonas euvesicatoria pv. vesicatoria (strain 85-10) (Xanthomonas campestris pv. vesicatoria).